The primary structure comprises 124 residues: Small ribosomal subunit protein uS12 (124 aa).

The disordered stretch occupies residues 1-23; the sequence is MATINQLVRKPRRSKVTKSNSAA. 3-methylthioaspartic acid is present on D89.

It belongs to the universal ribosomal protein uS12 family. Part of the 30S ribosomal subunit. Contacts proteins S8 and S17. May interact with IF1 in the 30S initiation complex.

Its function is as follows. With S4 and S5 plays an important role in translational accuracy. Functionally, interacts with and stabilizes bases of the 16S rRNA that are involved in tRNA selection in the A site and with the mRNA backbone. Located at the interface of the 30S and 50S subunits, it traverses the body of the 30S subunit contacting proteins on the other side and probably holding the rRNA structure together. The combined cluster of proteins S8, S12 and S17 appears to hold together the shoulder and platform of the 30S subunit. The sequence is that of Small ribosomal subunit protein uS12 from Pseudoalteromonas translucida (strain TAC 125).